A 165-amino-acid polypeptide reads, in one-letter code: 6,7-dimethyl-8-ribityllumazine synthase (165 aa).

5-amino-6-(D-ribitylamino)uracil contacts are provided by residues Trp26, Ser58–Glu60, and Val80–Ile82. Gly85–Thr86 serves as a coordination point for (2S)-2-hydroxy-3-oxobutyl phosphate. The active-site Proton donor is the His88. Position 113 (Asn113) interacts with 5-amino-6-(D-ribitylamino)uracil. Residue Arg127 participates in (2S)-2-hydroxy-3-oxobutyl phosphate binding.

The protein belongs to the DMRL synthase family.

The catalysed reaction is (2S)-2-hydroxy-3-oxobutyl phosphate + 5-amino-6-(D-ribitylamino)uracil = 6,7-dimethyl-8-(1-D-ribityl)lumazine + phosphate + 2 H2O + H(+). It functions in the pathway cofactor biosynthesis; riboflavin biosynthesis; riboflavin from 2-hydroxy-3-oxobutyl phosphate and 5-amino-6-(D-ribitylamino)uracil: step 1/2. Functionally, catalyzes the formation of 6,7-dimethyl-8-ribityllumazine by condensation of 5-amino-6-(D-ribitylamino)uracil with 3,4-dihydroxy-2-butanone 4-phosphate. This is the penultimate step in the biosynthesis of riboflavin. This chain is 6,7-dimethyl-8-ribityllumazine synthase, found in Saccharopolyspora erythraea (strain ATCC 11635 / DSM 40517 / JCM 4748 / NBRC 13426 / NCIMB 8594 / NRRL 2338).